Reading from the N-terminus, the 42-residue chain is Photosystem I reaction center subunit IX (42 aa).

The chain crosses the membrane as a helical span at residues 7 to 27; the sequence is YLSTAPVLAAIWFGILAGLLI.

The protein belongs to the PsaJ family.

The protein resides in the plastid. The protein localises to the chloroplast thylakoid membrane. Its function is as follows. May help in the organization of the PsaE and PsaF subunits. This chain is Photosystem I reaction center subunit IX, found in Staurastrum punctulatum (Green alga).